The sequence spans 825 residues: Zygotic DNA replication licensing factor mcm6-B (825 aa).

Residues 159–186 (CLDCQTLVRDVEQQFKYTQPSICRNPVC) form a C4-type zinc finger. The MCM domain maps to 347–554 (LYHNLCTSLF…TDYAIARRIV (208 aa)). Residue 397-404 (GDPSTAKS) coordinates ATP. Residues 529-532 (SRFD) carry the Arginine finger motif. Residues 668-679 (DQEDEHEVEEPQ) are compositionally biased toward acidic residues. Residues 668 to 690 (DQEDEHEVEEPQEGINGDADVPN) form a disordered region.

The protein belongs to the MCM family. In terms of assembly, component of the mcm2-7 complex (RLF-M). The complex forms a toroidal hexameric ring with the proposed subunit order mcm2-mcm6-mcm4-mcm7-mcm3-mcm5 (By simililarity). Begins to associate with zmcm3, mcm4 and mcm7 into mcm complexes at the neurula stage.

It localises to the nucleus. It carries out the reaction ATP + H2O = ADP + phosphate + H(+). Functionally, acts as a component of the mcm2-7 complex (mcm complex) which is the putative replicative helicase essential for 'once per cell cycle' DNA replication initiation and elongation in eukaryotic cells. The active ATPase sites in the mcm2-7 ring are formed through the interaction surfaces of two neighboring subunits such that a critical structure of a conserved arginine finger motif is provided in trans relative to the ATP-binding site of the Walker A box of the adjacent subunit. The six ATPase active sites, however, are likely to contribute differentially to the complex helicase activity. The existence of maternal and zygotic forms of mcm3 and mcm6 suggests that specific forms of mcm2-7 complexes may be used during different stages of development. May replace mmcm6 in the mcm2-7 complex. This chain is Zygotic DNA replication licensing factor mcm6-B (zmcm6-b), found in Xenopus laevis (African clawed frog).